The chain runs to 341 residues: Biotin synthase (341 aa).

A Radical SAM core domain is found at 53-272; sequence NHVETASLLS…IAVARIMMPK (220 aa). The [4Fe-4S] cluster site is built by Cys-68, Cys-72, and Cys-75. 4 residues coordinate [2Fe-2S] cluster: Cys-112, Cys-143, Cys-203, and Arg-276.

The protein belongs to the radical SAM superfamily. Biotin synthase family. As to quaternary structure, homodimer. The cofactor is [4Fe-4S] cluster. [2Fe-2S] cluster is required as a cofactor.

It catalyses the reaction (4R,5S)-dethiobiotin + (sulfur carrier)-SH + 2 reduced [2Fe-2S]-[ferredoxin] + 2 S-adenosyl-L-methionine = (sulfur carrier)-H + biotin + 2 5'-deoxyadenosine + 2 L-methionine + 2 oxidized [2Fe-2S]-[ferredoxin]. It functions in the pathway cofactor biosynthesis; biotin biosynthesis; biotin from 7,8-diaminononanoate: step 2/2. Catalyzes the conversion of dethiobiotin (DTB) to biotin by the insertion of a sulfur atom into dethiobiotin via a radical-based mechanism. This Nitrobacter winogradskyi (strain ATCC 25391 / DSM 10237 / CIP 104748 / NCIMB 11846 / Nb-255) protein is Biotin synthase.